The chain runs to 223 residues: MHLSGDDVIVWQYGVVKLNQTIVMTWVIMVFLAGGSAFLTRRLSSGIRISRWQSFLEMIVTMAMQQIREIGLRQPEKYLSYLATLFLFVATAVLFTIIPGYEPPTGSLSTTAALALSVFVAVPLYGIERVGFGAYLKSYMKPTFIMLPFNIISEFSRTLALAVRLFGNMMSGVMIIGILLGIAPLFFPVLMSVLGLLTGMVQAYIFSMLATVYIAAATKSRDE.

Transmembrane regions (helical) follow at residues 20–40 (QTIV…AFLT), 78–98 (YLSY…FTII), 107–127 (SLST…LYGI), 173–193 (VMII…LMSV), and 194–214 (LGLL…TVYI).

It belongs to the ATPase A chain family. F-type ATPases have 2 components, CF(1) - the catalytic core - and CF(0) - the membrane proton channel. CF(1) has five subunits: alpha(3), beta(3), gamma(1), delta(1), epsilon(1). CF(0) has four main subunits: a, b, b' and c.

Its subcellular location is the cell inner membrane. In terms of biological role, key component of the proton channel; it plays a direct role in the translocation of protons across the membrane. The sequence is that of ATP synthase subunit a 1 from Prosthecochloris aestuarii (strain DSM 271 / SK 413).